A 508-amino-acid polypeptide reads, in one-letter code: Amphoterin-induced protein 3 (508 aa).

An N-terminal signal peptide occupies residues Met-1–Gly-19. At Thr-20–Thr-383 the chain is on the extracellular side. The LRRNT domain occupies Asp-25–Thr-61. 2 cysteine pairs are disulfide-bonded: Cys-34–Cys-40 and Cys-38–Cys-47. LRR repeat units follow at residues Thr-62–Pro-83, Arg-86–Asn-107, Gly-110–Glu-133, Glu-134–Gly-155, Met-158–His-178, and Arg-184–Pro-207. Asn-107 carries N-linked (GlcNAc...) asparagine glycosylation. N-linked (GlcNAc...) asparagine glycosylation occurs at Asn-142. Residues Asn-219–Val-275 form the LRRCT domain. Disulfide bonds link Cys-223/Cys-251, Cys-225/Cys-273, and Cys-300/Cys-352. Residues Asn-272, Asn-301, Asn-362, and Asn-368 are each glycosylated (N-linked (GlcNAc...) asparagine). The Ig-like C2-type domain occupies Pro-279 to Ser-370. A helical membrane pass occupies residues Gly-384–Ala-404. Residues Pro-405 to Ser-508 are Cytoplasmic-facing.

The protein belongs to the immunoglobulin superfamily. AMIGO family. Binds AMIGO1 or AMIGO2. In terms of tissue distribution, ubiquitous.

The protein resides in the membrane. Its function is as follows. May mediate heterophilic cell-cell interaction. May contribute to signal transduction through its intracellular domain. The chain is Amphoterin-induced protein 3 from Mus musculus (Mouse).